The sequence spans 568 residues: Urease subunit alpha (568 aa).

In terms of domain architecture, Urease spans 130 to 568; the sequence is GGIDTHIHFI…LPMAQRYFLF (439 aa). Residues H135, H137, and K218 each coordinate Ni(2+). An N6-carboxylysine modification is found at K218. H220 is a binding site for substrate. Ni(2+) is bound by residues H247 and H273. H321 acts as the Proton donor in catalysis. Residue D361 coordinates Ni(2+).

This sequence belongs to the metallo-dependent hydrolases superfamily. Urease alpha subunit family. Heterotrimer of UreA (gamma), UreB (beta) and UreC (alpha) subunits. Three heterotrimers associate to form the active enzyme. It depends on Ni cation as a cofactor. Post-translationally, carboxylation allows a single lysine to coordinate two nickel ions.

It is found in the cytoplasm. The enzyme catalyses urea + 2 H2O + H(+) = hydrogencarbonate + 2 NH4(+). The protein operates within nitrogen metabolism; urea degradation; CO(2) and NH(3) from urea (urease route): step 1/1. The protein is Urease subunit alpha of Burkholderia ambifaria (strain ATCC BAA-244 / DSM 16087 / CCUG 44356 / LMG 19182 / AMMD) (Burkholderia cepacia (strain AMMD)).